A 156-amino-acid chain; its full sequence is Snaclec A12 (156 aa).

The first 23 residues, 1–23 (MGRSISVSFGLLVVFLSLSGTGA), serve as a signal peptide directing secretion. Disulfide bonds link Cys-27–Cys-38, Cys-55–Cys-148, and Cys-123–Cys-140. Residues 34–149 (YEGHCYKVFN…CELAYHFICM (116 aa)) enclose the C-type lectin domain.

This sequence belongs to the snaclec family. Heterodimer; disulfide-linked. In terms of tissue distribution, expressed by the venom gland.

It is found in the secreted. Interferes with one step of hemostasis (modulation of platelet aggregation, or coagulation cascade, for example). This is Snaclec A12 from Macrovipera lebetinus (Levantine viper).